A 128-amino-acid chain; its full sequence is Fluoride-specific ion channel FluC (128 aa).

The next 4 membrane-spanning stretches (helical) occupy residues 8-28 (IIFI…LGLL), 38-58 (LGTL…LAFF), 71-91 (FFVT…AEVI), and 103-123 (LMLA…GVFI). Na(+) contacts are provided by Gly78 and Thr81.

It belongs to the fluoride channel Fluc/FEX (TC 1.A.43) family.

It is found in the cell inner membrane. It carries out the reaction fluoride(in) = fluoride(out). With respect to regulation, na(+) is not transported, but it plays an essential structural role and its presence is essential for fluoride channel function. Its function is as follows. Fluoride-specific ion channel. Important for reducing fluoride concentration in the cell, thus reducing its toxicity. This chain is Fluoride-specific ion channel FluC, found in Pasteurella multocida (strain Pm70).